The sequence spans 300 residues: 4-hydroxy-tetrahydrodipicolinate synthase (300 aa).

Threonine 45 provides a ligand contact to pyruvate. The active-site Proton donor/acceptor is tyrosine 140. Lysine 169 functions as the Schiff-base intermediate with substrate in the catalytic mechanism. Position 210 (isoleucine 210) interacts with pyruvate.

Belongs to the DapA family. Homotetramer; dimer of dimers.

It localises to the cytoplasm. It carries out the reaction L-aspartate 4-semialdehyde + pyruvate = (2S,4S)-4-hydroxy-2,3,4,5-tetrahydrodipicolinate + H2O + H(+). Its pathway is amino-acid biosynthesis; L-lysine biosynthesis via DAP pathway; (S)-tetrahydrodipicolinate from L-aspartate: step 3/4. Its function is as follows. Catalyzes the condensation of (S)-aspartate-beta-semialdehyde [(S)-ASA] and pyruvate to 4-hydroxy-tetrahydrodipicolinate (HTPA). This chain is 4-hydroxy-tetrahydrodipicolinate synthase, found in Helicobacter pylori (strain Shi470).